The chain runs to 494 residues: Putative NAD kinase 3 (494 aa).

The protein belongs to the NAD kinase family.

The catalysed reaction is NAD(+) + ATP = ADP + NADP(+) + H(+). This chain is Putative NAD kinase 3, found in Oryza sativa subsp. japonica (Rice).